Consider the following 317-residue polypeptide: Transaldolase (317 aa).

Residue K132 is the Schiff-base intermediate with substrate of the active site.

This sequence belongs to the transaldolase family. Type 1 subfamily. As to quaternary structure, homodimer.

It localises to the cytoplasm. The catalysed reaction is D-sedoheptulose 7-phosphate + D-glyceraldehyde 3-phosphate = D-erythrose 4-phosphate + beta-D-fructose 6-phosphate. Its pathway is carbohydrate degradation; pentose phosphate pathway; D-glyceraldehyde 3-phosphate and beta-D-fructose 6-phosphate from D-ribose 5-phosphate and D-xylulose 5-phosphate (non-oxidative stage): step 2/3. In terms of biological role, transaldolase is important for the balance of metabolites in the pentose-phosphate pathway. The chain is Transaldolase from Shewanella frigidimarina (strain NCIMB 400).